Consider the following 192-residue polypeptide: Imidazoleglycerol-phosphate dehydratase (192 aa).

The protein belongs to the imidazoleglycerol-phosphate dehydratase family.

The protein localises to the cytoplasm. It carries out the reaction D-erythro-1-(imidazol-4-yl)glycerol 3-phosphate = 3-(imidazol-4-yl)-2-oxopropyl phosphate + H2O. Its pathway is amino-acid biosynthesis; L-histidine biosynthesis; L-histidine from 5-phospho-alpha-D-ribose 1-diphosphate: step 6/9. This chain is Imidazoleglycerol-phosphate dehydratase, found in Staphylococcus saprophyticus subsp. saprophyticus (strain ATCC 15305 / DSM 20229 / NCIMB 8711 / NCTC 7292 / S-41).